Consider the following 323-residue polypeptide: ATP synthase gamma chain (323 aa).

The tract at residues 215 to 237 (PAGGPAKEQEQGDEGGHGAPSAA) is disordered. Residues 221–230 (KEQEQGDEGG) show a composition bias toward basic and acidic residues.

Belongs to the ATPase gamma chain family. As to quaternary structure, F-type ATPases have 2 components, CF(1) - the catalytic core - and CF(0) - the membrane proton channel. CF(1) has five subunits: alpha(3), beta(3), gamma(1), delta(1), epsilon(1). CF(0) has three main subunits: a, b and c.

The protein resides in the cell inner membrane. In terms of biological role, produces ATP from ADP in the presence of a proton gradient across the membrane. The gamma chain is believed to be important in regulating ATPase activity and the flow of protons through the CF(0) complex. This chain is ATP synthase gamma chain, found in Sorangium cellulosum (strain So ce56) (Polyangium cellulosum (strain So ce56)).